The primary structure comprises 342 residues: Flavanone 3-dioxygenase 2 (342 aa).

Residues 193 to 293 (QEQHMAVNYY…RMSVASFLCP (101 aa)) form the Fe2OG dioxygenase domain. Fe cation is bound by residues His-217, Asp-219, and His-274. Arg-284 contacts 2-oxoglutarate.

This sequence belongs to the iron/ascorbate-dependent oxidoreductase family. Requires Fe(2+) as cofactor. It depends on L-ascorbate as a cofactor. Expressed in roots, leaves and stems. Expressed at low levels in seeds.

It carries out the reaction a (2S)-flavan-4-one + 2-oxoglutarate + O2 = a (2R,3R)-dihydroflavonol + succinate + CO2. The protein operates within secondary metabolite biosynthesis; flavonoid biosynthesis. In terms of biological role, catalyzes the 3-beta-hydroxylation of 2S-flavanones to 2R,3R-dihydroflavonols which are intermediates in the biosynthesis of flavonols, anthocyanidins, catechins and proanthocyanidins in plants. Converts (2S)-eriodictyol to (+)-taxifolin and (2S)-naringenin to (+)-(2R/3R)-dihydrokaempferol in vitro. This chain is Flavanone 3-dioxygenase 2, found in Oryza sativa subsp. japonica (Rice).